The chain runs to 449 residues: Nuclear hormone receptor family member nhr-43 (449 aa).

The segment at residues 44 to 122 (NIHCRVCERR…VGLNVDAVVG (79 aa)) is a DNA-binding region (nuclear receptor). 2 NR C4-type zinc fingers span residues 47-68 (CRVC…CRAC) and 84-105 (CRRG…CQKC). Basic and acidic residues predominate over residues 125 to 142 (SPDHVKTTSRDESVKKED). The tract at residues 125-154 (SPDHVKTTSRDESVKKEDEESDTGSEGKSC) is disordered. Positions 200–449 (NYNEFTKSRL…SDLNAYLYSI (250 aa)) constitute an NR LBD domain.

The protein localises to the nucleus. Functionally, ligand-activated transcription factor. Positively modulates expression of homeobox protein lin-39, perhaps by binding to the sequence motif 5'-TGAC-3' in regulatory regions of the lin-39 gene, acting in the embryo, and also in the vulval lineage. This is Nuclear hormone receptor family member nhr-43 from Caenorhabditis elegans.